The following is a 357-amino-acid chain: UPF0283 membrane protein BOV_0999 (357 aa).

Positions 1–36 (MSDKTPRKPTAFRLEQPARVSAASEQEEPRRPRAVK) are disordered. Positions 27 to 36 (EEPRRPRAVK) are enriched in basic and acidic residues. Transmembrane regions (helical) follow at residues 78-98 (ILFGALGILVSFAIGIWTEDL) and 109-129 (LGWTALGVAMVALAAFAAIIL).

It belongs to the UPF0283 family.

It is found in the cell inner membrane. The sequence is that of UPF0283 membrane protein BOV_0999 from Brucella ovis (strain ATCC 25840 / 63/290 / NCTC 10512).